The sequence spans 1377 residues: Clustered mitochondria protein homolog (1377 aa).

A disordered region spans residues 1-61 (MLKSIQRNGK…GETKKKSDSE (61 aa)). One can recognise a Clu domain in the interval 353–595 (RAEDTFSSKL…RTFPPDVNFL (243 aa)). Residues 519-552 (VYGSIDFGKTVLSHEKYLELLNNAGKHLKIYPHS) form a TPR 1 repeat. Disordered regions lie at residues 651–700 (NKRQ…VPKV) and 886–917 (DVLT…KSSF). Basic and acidic residues predominate over residues 655-690 (QKQDTPKEETKAIEPAAKEDSANNNKEEPAAKKGEP). A compositionally biased stretch (polar residues) spans 886–896 (DVLTKSGSSGK). TPR repeat units follow at residues 1022–1055 (AYNF…LNNV), 1148–1181 (ALLD…NIKY), and 1183–1216 (GEKS…EKET). Residues 1310-1377 (KEGGAAGESS…SKANPVASSS (68 aa)) form a disordered region. Residues 1364–1377 (ASSSSKANPVASSS) are compositionally biased toward low complexity.

The protein belongs to the CLU family.

It localises to the cytoplasm. Functionally, mRNA-binding protein involved in proper cytoplasmic distribution of mitochondria. In Culex quinquefasciatus (Southern house mosquito), this protein is Clustered mitochondria protein homolog.